We begin with the raw amino-acid sequence, 110 residues long: Small ribosomal subunit protein eS25 (110 aa).

Residues 1 to 39 (MPPKAAGGKSKQIQASKAAAKGSSGGAGRKKWSKGRSRE) are disordered.

Belongs to the eukaryotic ribosomal protein eS25 family.

This Dictyostelium discoideum (Social amoeba) protein is Small ribosomal subunit protein eS25 (rps25).